Reading from the N-terminus, the 396-residue chain is MSEYSLFTSESVSEGHPDKIADQISDAVLDAIIAQDKYARVACETLVKTGVAIIAGEVTTSAWVDLEELVRKVIIDIGYNSSDVGFDGATCAVMNIIGKQSVDIAQGVDRSKPEDQGAGDQGLMFGYASNETDVLMPAPICFSHRLVERQAEARKSGLLPWLRPDAKSQVTCRYENGRVVGIDAVVLSTQHNPEVSQKDLQEAVMELIVKHTLPAELLHKGTQYHINPTGNFIIGGPVGDCGLTGRKIIVDSYGGMARHGGGAFSGKDPSKVDRSAAYAGRYVAKNIVAAGLAERCEIQVSYAIGVAQPTSISINTFGTGKVSDDKIVQLVRECFDLRPYAITKMLDLLHPMYQETAAYGHFGRTPQQKTVGDDTFTTFTWERTDRAQALRDAAGL.

ATP is bound at residue histidine 16. Aspartate 18 lines the Mg(2+) pocket. Glutamate 44 contributes to the K(+) binding site. Positions 57 and 100 each coordinate L-methionine. Residues 100–110 (QSVDIAQGVDR) are flexible loop. Residues 165-167 (DAK), aspartate 240, 246-247 (RK), alanine 263, and lysine 267 contribute to the ATP site. Position 240 (aspartate 240) interacts with L-methionine. Position 271 (lysine 271) interacts with L-methionine.

This sequence belongs to the AdoMet synthase family. In terms of assembly, homotetramer; dimer of dimers. Requires Mg(2+) as cofactor. The cofactor is K(+).

The protein localises to the cytoplasm. The catalysed reaction is L-methionine + ATP + H2O = S-adenosyl-L-methionine + phosphate + diphosphate. It participates in amino-acid biosynthesis; S-adenosyl-L-methionine biosynthesis; S-adenosyl-L-methionine from L-methionine: step 1/1. Functionally, catalyzes the formation of S-adenosylmethionine (AdoMet) from methionine and ATP. The overall synthetic reaction is composed of two sequential steps, AdoMet formation and the subsequent tripolyphosphate hydrolysis which occurs prior to release of AdoMet from the enzyme. The sequence is that of S-adenosylmethionine synthase from Pseudomonas entomophila (strain L48).